The chain runs to 970 residues: Glycine dehydrogenase (decarboxylating) (970 aa).

Residue Lys723 is modified to N6-(pyridoxal phosphate)lysine.

It belongs to the GcvP family. As to quaternary structure, the glycine cleavage system is composed of four proteins: P, T, L and H. Pyridoxal 5'-phosphate is required as a cofactor.

The enzyme catalyses N(6)-[(R)-lipoyl]-L-lysyl-[glycine-cleavage complex H protein] + glycine + H(+) = N(6)-[(R)-S(8)-aminomethyldihydrolipoyl]-L-lysyl-[glycine-cleavage complex H protein] + CO2. Functionally, the glycine cleavage system catalyzes the degradation of glycine. The P protein binds the alpha-amino group of glycine through its pyridoxal phosphate cofactor; CO(2) is released and the remaining methylamine moiety is then transferred to the lipoamide cofactor of the H protein. This is Glycine dehydrogenase (decarboxylating) from Burkholderia pseudomallei (strain 1106a).